A 291-amino-acid polypeptide reads, in one-letter code: Elongation factor Ts (291 aa).

Positions 80–83 (TDFV) are involved in Mg(2+) ion dislocation from EF-Tu.

The protein belongs to the EF-Ts family.

The protein resides in the cytoplasm. Functionally, associates with the EF-Tu.GDP complex and induces the exchange of GDP to GTP. It remains bound to the aminoacyl-tRNA.EF-Tu.GTP complex up to the GTP hydrolysis stage on the ribosome. The protein is Elongation factor Ts of Limosilactobacillus reuteri (strain DSM 20016) (Lactobacillus reuteri).